The chain runs to 48 residues: Phospholipase A2 superbin d (48 aa).

3 residues coordinate Ca(2+): tyrosine 28, glycine 30, and glycine 32. Cysteine 29 and cysteine 45 are disulfide-bonded. The active site involves histidine 48.

It depends on Ca(2+) as a cofactor. As to expression, expressed by the venom gland.

The protein localises to the secreted. The catalysed reaction is a 1,2-diacyl-sn-glycero-3-phosphocholine + H2O = a 1-acyl-sn-glycero-3-phosphocholine + a fatty acid + H(+). Functionally, snake venom phospholipase A2 (PLA2) that inhibits collagen-induced platelet aggregation. In terms of inhibition of platelet aggregation, superbin d is less potent as superbin a, b, and c. PLA2 catalyzes the calcium-dependent hydrolysis of the 2-acyl groups in 3-sn-phosphoglycerides. This is Phospholipase A2 superbin d from Austrelaps superbus (Lowland copperhead snake).